Reading from the N-terminus, the 1323-residue chain is DNA-directed RNA polymerase subunit beta' (1323 aa).

Zn(2+)-binding residues include C60, C62, C75, and C78. Positions 535, 537, and 539 each coordinate Mg(2+). Residues C894, C977, C984, and C987 each contribute to the Zn(2+) site.

Belongs to the RNA polymerase beta' chain family. In terms of assembly, the RNAP catalytic core consists of 2 alpha, 1 beta, 1 beta' and 1 omega subunit. When a sigma factor is associated with the core the holoenzyme is formed, which can initiate transcription. Requires Mg(2+) as cofactor. Zn(2+) serves as cofactor.

The catalysed reaction is RNA(n) + a ribonucleoside 5'-triphosphate = RNA(n+1) + diphosphate. Its function is as follows. DNA-dependent RNA polymerase catalyzes the transcription of DNA into RNA using the four ribonucleoside triphosphates as substrates. This is DNA-directed RNA polymerase subunit beta' from Corynebacterium urealyticum (strain ATCC 43042 / DSM 7109).